The chain runs to 143 residues: SsrA-binding protein (143 aa).

Belongs to the SmpB family.

It is found in the cytoplasm. Its function is as follows. Required for rescue of stalled ribosomes mediated by trans-translation. Binds to transfer-messenger RNA (tmRNA), required for stable association of tmRNA with ribosomes. tmRNA and SmpB together mimic tRNA shape, replacing the anticodon stem-loop with SmpB. tmRNA is encoded by the ssrA gene; the 2 termini fold to resemble tRNA(Ala) and it encodes a 'tag peptide', a short internal open reading frame. During trans-translation Ala-aminoacylated tmRNA acts like a tRNA, entering the A-site of stalled ribosomes, displacing the stalled mRNA. The ribosome then switches to translate the ORF on the tmRNA; the nascent peptide is terminated with the 'tag peptide' encoded by the tmRNA and targeted for degradation. The ribosome is freed to recommence translation, which seems to be the essential function of trans-translation. In Deinococcus geothermalis (strain DSM 11300 / CIP 105573 / AG-3a), this protein is SsrA-binding protein.